The primary structure comprises 755 residues: Exocyst complex component 3 (755 aa).

2 coiled-coil regions span residues 34 to 62 (DQLD…AAIQ) and 618 to 649 (RAVM…QLRF). Position 38 is an N6-acetyllysine (lysine 38).

It belongs to the SEC6 family. As to quaternary structure, the exocyst complex is composed of EXOC1, EXOC2, EXOC3, EXOC4, EXOC5, EXOC6, EXOC7 and EXOC8. Interacts with EXOC3L1. Interacts with BIRC6/bruce. Interacts with MYRIP. Interacts with SLC6A9. As to expression, widely expressed, with highest levels in kidney, followed by brain (at protein level).

Its subcellular location is the cytoplasm. It localises to the perinuclear region. The protein localises to the cell projection. It is found in the growth cone. The protein resides in the neuron projection. Its subcellular location is the midbody. It localises to the golgi apparatus. In terms of biological role, component of the exocyst complex involved in the docking of exocytic vesicles with fusion sites on the plasma membrane. In Rattus norvegicus (Rat), this protein is Exocyst complex component 3 (Exoc3).